The chain runs to 175 residues: uncharacterized protein (175 aa).

A mitochondrion-targeting transit peptide spans Met1–Asn11. A disordered region spans residues Arg24 to Cys92. Over residues Gly41–Arg63 the composition is skewed to basic and acidic residues.

Its subcellular location is the mitochondrion. This is an uncharacterized protein from Homo sapiens (Human).